Consider the following 295-residue polypeptide: Pyridoxal 5'-phosphate synthase subunit PdxS (295 aa).

Residue Asp25 participates in D-ribose 5-phosphate binding. The Schiff-base intermediate with D-ribose 5-phosphate role is filled by Lys82. Gly154 provides a ligand contact to D-ribose 5-phosphate. Residue Arg166 participates in D-glyceraldehyde 3-phosphate binding. Residues Gly215 and 236–237 (GS) contribute to the D-ribose 5-phosphate site.

The protein belongs to the PdxS/SNZ family. As to quaternary structure, in the presence of PdxT, forms a dodecamer of heterodimers.

It carries out the reaction aldehydo-D-ribose 5-phosphate + D-glyceraldehyde 3-phosphate + L-glutamine = pyridoxal 5'-phosphate + L-glutamate + phosphate + 3 H2O + H(+). It participates in cofactor biosynthesis; pyridoxal 5'-phosphate biosynthesis. Its function is as follows. Catalyzes the formation of pyridoxal 5'-phosphate from ribose 5-phosphate (RBP), glyceraldehyde 3-phosphate (G3P) and ammonia. The ammonia is provided by the PdxT subunit. Can also use ribulose 5-phosphate and dihydroxyacetone phosphate as substrates, resulting from enzyme-catalyzed isomerization of RBP and G3P, respectively. This chain is Pyridoxal 5'-phosphate synthase subunit PdxS, found in Macrococcus caseolyticus (strain JCSC5402) (Macrococcoides caseolyticum).